A 739-amino-acid polypeptide reads, in one-letter code: Catalase-peroxidase 2 (739 aa).

An N-terminal signal peptide occupies residues 1–26 (MKKSTIPSMSALTLAMSLAFGGAAIA). The tryptophyl-tyrosyl-methioninium (Trp-Tyr) (with M-253) cross-link spans 105-227 (WHSAGVYRIF…MGATQMGLIY (123 aa)). The active-site Proton acceptor is the histidine 106. A cross-link (tryptophyl-tyrosyl-methioninium (Tyr-Met) (with W-105)) is located at residues 227 to 253 (YVNPEGPNGVPDPLASAKEIRDTFGRM). Histidine 268 serves as a coordination point for heme b.

This sequence belongs to the peroxidase family. Peroxidase/catalase subfamily. In terms of assembly, homodimer or homotetramer. Heme b serves as cofactor. Formation of the three residue Trp-Tyr-Met cross-link is important for the catalase, but not the peroxidase activity of the enzyme.

It catalyses the reaction H2O2 + AH2 = A + 2 H2O. It carries out the reaction 2 H2O2 = O2 + 2 H2O. Its function is as follows. Bifunctional enzyme with both catalase and broad-spectrum peroxidase activity. The polypeptide is Catalase-peroxidase 2 (Shewanella sp. (strain ANA-3)).